A 359-amino-acid chain; its full sequence is Cytochrome c oxidase subunit 2 (359 aa).

An N-terminal signal peptide occupies residues 1–28 (MEQQNKRGLKRKALLGGVLGSGGLAMAG). A lipid anchor (N-palmitoyl cysteine) is attached at Cys29. Residue Cys29 is the site of S-diacylglycerol cysteine attachment. A run of 2 helical transmembrane segments spans residues 64–84 (VWVA…TAIF) and 107–127 (VPLE…LFFF). Residues His244, Cys285, Glu287, Cys289, His293, and Met296 each coordinate Cu cation. Positions 338 to 359 (STAPFVSDRTGTRDGENFQTPA) are disordered.

It belongs to the cytochrome c oxidase subunit 2 family. In terms of assembly, associates with subunits I, III and IV to form cytochrome c oxidase. Requires binuclear copper center (CuA) as cofactor.

It localises to the cell membrane. It carries out the reaction 4 Fe(II)-[cytochrome c] + O2 + 8 H(+)(in) = 4 Fe(III)-[cytochrome c] + 2 H2O + 4 H(+)(out). Its function is as follows. Subunits I and II form the functional core of the enzyme complex. Electrons originating in cytochrome c are transferred via heme a and Cu(A) to the binuclear center formed by heme a3 and Cu(B). The protein is Cytochrome c oxidase subunit 2 (ctaC) of Corynebacterium efficiens (strain DSM 44549 / YS-314 / AJ 12310 / JCM 11189 / NBRC 100395).